Reading from the N-terminus, the 323-residue chain is tRNA U34 carboxymethyltransferase (323 aa).

Carboxy-S-adenosyl-L-methionine contacts are provided by residues lysine 91, tryptophan 105, lysine 110, glycine 130, 181 to 182, methionine 196, tyrosine 200, and arginine 315; that span reads IE.

This sequence belongs to the class I-like SAM-binding methyltransferase superfamily. CmoB family. In terms of assembly, homotetramer.

The catalysed reaction is carboxy-S-adenosyl-L-methionine + 5-hydroxyuridine(34) in tRNA = 5-carboxymethoxyuridine(34) in tRNA + S-adenosyl-L-homocysteine + H(+). Catalyzes carboxymethyl transfer from carboxy-S-adenosyl-L-methionine (Cx-SAM) to 5-hydroxyuridine (ho5U) to form 5-carboxymethoxyuridine (cmo5U) at position 34 in tRNAs. This is tRNA U34 carboxymethyltransferase from Sodalis glossinidius (strain morsitans).